Here is a 542-residue protein sequence, read N- to C-terminus: Excitatory amino acid transporter 1 (542 aa).

Over 1 to 47 (MTKSNGEEARLGGRMERFQQGVRKRTLLAKKKVQNITKEDVKSYLFR) the chain is Cytoplasmic. A helical transmembrane segment spans residues 48–68 (NAFVLLTVTAVIVGTILGFTL). At 69 to 86 (RPYRMSYREVKYFSFPGE) the chain is on the extracellular side. Residues 87–108 (LLMRMLQMLVLPLIISSLVTGM) traverse the membrane as a helical segment. At 109-122 (AALDSKASGKMGMR) the chain is on the cytoplasmic side. A helical membrane pass occupies residues 123–145 (AVVYYMTTTIIAVVIGIIIVIII). Topologically, residues 146-236 (HPGKGTKENM…ITEELVPVPG (91 aa)) are extracellular. Residues 237–260 (SVNGVNALGLVVFSMCFGFVIGNM) traverse the membrane as a helical segment. Topologically, residues 261 to 269 (KEQGQALRE) are cytoplasmic. Residues 270-297 (FFDSLNEAIMRLVAVIMWYAPLGILFLI) form a helical membrane-spanning segment. The Extracellular portion of the chain corresponds to 298 to 318 (AGKIVEMEDMGVIGGQLAMYT). Residues 319–340 (VTVIVGLLIHAVIVLPLLYFLV) traverse the membrane as a helical segment. The Cytoplasmic portion of the chain corresponds to 341-345 (TRKNP). Positions 346–376 (WVFIGGLLQALITALGTSSSSATLPITFKCL) form an intramembrane region, discontinuously helical. 363–365 (SSS) is a binding site for L-aspartate. At 377–385 (EENNGVDKR) the chain is on the cytoplasmic side. A helical transmembrane segment spans residues 386 to 412 (VTRFVLPVGATINMDGTALYEALAAIF). Na(+) is bound by residues G394, T396, and N398. T402 is a binding site for L-aspartate. The Extracellular segment spans residues 413-425 (IAQVNNFELNFGQ). Residues 426–459 (IITISITATAASIGAAGIPQAGLVTMVIVLTSVG) constitute an intramembrane region (discontinuously helical). 443–447 (IPQAG) is a binding site for L-aspartate. Residues 460–472 (LPTDDITLIIAVD) are Extracellular-facing. A helical transmembrane segment spans residues 473 to 494 (WFLDRLRTTTNVLGDSLGAGIV). The L-aspartate site is built by D476 and N483. 2 residues coordinate Na(+): N483 and D487. The Cytoplasmic portion of the chain corresponds to 495 to 542 (EHLSRHELKNRDVEMGNSVIEENEMKKPYQLISQESEIEKSMDSETKM). S512 is subject to Phosphoserine.

The protein belongs to the dicarboxylate/amino acid:cation symporter (DAACS) (TC 2.A.23) family. SLC1A3 subfamily. Homotrimer. Post-translationally, glycosylated.

The protein resides in the cell membrane. It carries out the reaction K(+)(in) + L-glutamate(out) + 3 Na(+)(out) + H(+)(out) = K(+)(out) + L-glutamate(in) + 3 Na(+)(in) + H(+)(in). The enzyme catalyses K(+)(in) + L-aspartate(out) + 3 Na(+)(out) + H(+)(out) = K(+)(out) + L-aspartate(in) + 3 Na(+)(in) + H(+)(in). It catalyses the reaction D-aspartate(out) + K(+)(in) + 3 Na(+)(out) + H(+)(out) = D-aspartate(in) + K(+)(out) + 3 Na(+)(in) + H(+)(in). Its function is as follows. Sodium-dependent, high-affinity amino acid transporter that mediates the uptake of L-glutamate and also L-aspartate and D-aspartate. Functions as a symporter that transports one amino acid molecule together with two or three Na(+) ions and one proton, in parallel with the counter-transport of one K(+) ion. Plays a redundant role in the rapid removal of released glutamate from the synaptic cleft, which is essential for terminating the postsynaptic action of glutamate. This chain is Excitatory amino acid transporter 1 (SLC1A3), found in Bos taurus (Bovine).